We begin with the raw amino-acid sequence, 514 residues long: ATP synthase subunit alpha (514 aa).

ATP is bound at residue 170–177 (GDRQIGKT).

The protein belongs to the ATPase alpha/beta chains family. F-type ATPases have 2 components, CF(1) - the catalytic core - and CF(0) - the membrane proton channel. CF(1) has five subunits: alpha(3), beta(3), gamma(1), delta(1), epsilon(1). CF(0) has three main subunits: a(1), b(2) and c(9-12). The alpha and beta chains form an alternating ring which encloses part of the gamma chain. CF(1) is attached to CF(0) by a central stalk formed by the gamma and epsilon chains, while a peripheral stalk is formed by the delta and b chains.

The protein localises to the cell inner membrane. It catalyses the reaction ATP + H2O + 4 H(+)(in) = ADP + phosphate + 5 H(+)(out). In terms of biological role, produces ATP from ADP in the presence of a proton gradient across the membrane. The alpha chain is a regulatory subunit. The sequence is that of ATP synthase subunit alpha from Pseudomonas putida (strain GB-1).